The sequence spans 505 residues: Glycerol kinase (505 aa).

An ADP-binding site is contributed by Thr-14. 3 residues coordinate ATP: Thr-14, Thr-15, and Ser-16. Thr-14 provides a ligand contact to sn-glycerol 3-phosphate. Arg-18 provides a ligand contact to ADP. Sn-glycerol 3-phosphate is bound by residues Arg-84, Glu-85, Tyr-136, and Asp-246. Residues Arg-84, Glu-85, Tyr-136, Asp-246, and Gln-247 each contribute to the glycerol site. Thr-268 and Gly-311 together coordinate ADP. ATP is bound by residues Thr-268, Gly-311, Gln-315, and Gly-412. Residues Gly-412 and Asn-416 each coordinate ADP.

Belongs to the FGGY kinase family.

The catalysed reaction is glycerol + ATP = sn-glycerol 3-phosphate + ADP + H(+). It functions in the pathway polyol metabolism; glycerol degradation via glycerol kinase pathway; sn-glycerol 3-phosphate from glycerol: step 1/1. Inhibited by fructose 1,6-bisphosphate (FBP). In terms of biological role, key enzyme in the regulation of glycerol uptake and metabolism. Catalyzes the phosphorylation of glycerol to yield sn-glycerol 3-phosphate. This Vibrio campbellii (strain ATCC BAA-1116) protein is Glycerol kinase.